A 480-amino-acid chain; its full sequence is Thiamine biosynthesis bifunctional protein ThiM/ThiE (480 aa).

The segment at 1–287 (MSTLPERVRE…LYVLVSGATP (287 aa)) is hydroxyethylthiazole kinase. Residue Met40 coordinates 5-(2-hydroxyethyl)-4-methylthiazole. Residues Arg116 and Thr164 each coordinate ATP. Gly191 is a binding site for 5-(2-hydroxyethyl)-4-methylthiazole. The thiamine-phosphate synthase stretch occupies residues 288–480 (PDVLEAVLQA…VRRAKGEVSA (193 aa)). 4-amino-2-methyl-5-(diphosphooxymethyl)pyrimidine-binding positions include 303–307 (QFREK) and Asn335. Mg(2+) contacts are provided by Asp336 and Asp355. A 4-amino-2-methyl-5-(diphosphooxymethyl)pyrimidine-binding site is contributed by Thr374. Residue 400–402 (TPS) coordinates 2-[(2R,5Z)-2-carboxy-4-methylthiazol-5(2H)-ylidene]ethyl phosphate. Position 403 (Lys403) interacts with 4-amino-2-methyl-5-(diphosphooxymethyl)pyrimidine. 2-[(2R,5Z)-2-carboxy-4-methylthiazol-5(2H)-ylidene]ethyl phosphate contacts are provided by residues Gly431 and 451–452 (IS).

The protein in the N-terminal section; belongs to the Thz kinase family. In the C-terminal section; belongs to the thiamine-phosphate synthase family. The cofactor is Mg(2+).

It catalyses the reaction 5-(2-hydroxyethyl)-4-methylthiazole + ATP = 4-methyl-5-(2-phosphooxyethyl)-thiazole + ADP + H(+). The enzyme catalyses 2-[(2R,5Z)-2-carboxy-4-methylthiazol-5(2H)-ylidene]ethyl phosphate + 4-amino-2-methyl-5-(diphosphooxymethyl)pyrimidine + 2 H(+) = thiamine phosphate + CO2 + diphosphate. It carries out the reaction 2-(2-carboxy-4-methylthiazol-5-yl)ethyl phosphate + 4-amino-2-methyl-5-(diphosphooxymethyl)pyrimidine + 2 H(+) = thiamine phosphate + CO2 + diphosphate. The catalysed reaction is 4-methyl-5-(2-phosphooxyethyl)-thiazole + 4-amino-2-methyl-5-(diphosphooxymethyl)pyrimidine + H(+) = thiamine phosphate + diphosphate. It participates in cofactor biosynthesis; thiamine diphosphate biosynthesis; 4-methyl-5-(2-phosphoethyl)-thiazole from 5-(2-hydroxyethyl)-4-methylthiazole: step 1/1. The protein operates within cofactor biosynthesis; thiamine diphosphate biosynthesis; thiamine phosphate from 4-amino-2-methyl-5-diphosphomethylpyrimidine and 4-methyl-5-(2-phosphoethyl)-thiazole: step 1/1. Condenses 4-methyl-5-(beta-hydroxyethyl)thiazole monophosphate (THZ-P) and 2-methyl-4-amino-5-hydroxymethyl pyrimidine pyrophosphate (HMP-PP) to form thiamine monophosphate (TMP). The polypeptide is Thiamine biosynthesis bifunctional protein ThiM/ThiE (thiM/thiE) (Symbiobacterium thermophilum (strain DSM 24528 / JCM 14929 / IAM 14863 / T)).